The sequence spans 99 residues: U1-theraphotoxin-Tal1a (99 aa).

The N-terminal stretch at 1-22 (MNTIQVIIFAVVLVLTVTVGQA) is a signal peptide. Residues 23 to 57 (DEDSAETSLLRKLKEAEASLFGQHLEESQHSREKR) constitute a propeptide that is removed on maturation. 3 disulfide bridges follow: Cys58–Cys73, Cys65–Cys78, and Cys72–Cys93. Ser98 is subject to Serine amide.

This sequence belongs to the neurotoxin 14 (magi-1) family. 08 (Ltx-4) subfamily. As to expression, expressed by the venom gland.

It localises to the secreted. In terms of biological role, insecticidal toxin that shows strong lethal effects on American cockroaches (P.americana) and common mealbeetle (T.molitor). Possibly acts by blocking ion channel currents. Also shows significant analgesic effects in mice models of pain including abdominal writhing induced by acetic acid and formalin-induced paw licking tests. In addition, exerts marked inhibition of proliferation of some human tumor cell lines including C8166, Molt-4, A-549, BIU-87, T24, and Calu-6. The polypeptide is U1-theraphotoxin-Tal1a (Tliltocatl albopilosus (Curlyhair tarantula)).